A 196-amino-acid polypeptide reads, in one-letter code: Nucleoid occlusion factor SlmA (196 aa).

Residues 7–68 (PNRRDEILQA…GLIEFIEESI (62 aa)) form the HTH tetR-type domain. The H-T-H motif DNA-binding region spans 31 to 50 (TTAKLAKQVGVSEAALYRHF). The stretch at 71–93 (RVNRILEDEKDTLKRIELLLKLL) forms a coiled coil.

Belongs to the nucleoid occlusion factor SlmA family. As to quaternary structure, homodimer. Interacts with FtsZ.

The protein localises to the cytoplasm. The protein resides in the nucleoid. Functionally, required for nucleoid occlusion (NO) phenomenon, which prevents Z-ring formation and cell division over the nucleoid. Acts as a DNA-associated cell division inhibitor that binds simultaneously chromosomal DNA and FtsZ, and disrupts the assembly of FtsZ polymers. SlmA-DNA-binding sequences (SBS) are dispersed on non-Ter regions of the chromosome, preventing FtsZ polymerization at these regions. This Aliivibrio fischeri (strain MJ11) (Vibrio fischeri) protein is Nucleoid occlusion factor SlmA.